We begin with the raw amino-acid sequence, 309 residues long: Protoheme IX farnesyltransferase (309 aa).

9 helical membrane-spanning segments follow: residues 30-49 (VMSL…PGGV), 53-75 (IGFT…NMWY), 98-118 (AGEA…MLGL), 123-143 (VAAG…SMWL), 151-171 (IVIG…AVTG), 178-198 (VLMF…LALF), 224-244 (ILIY…TEVA), 247-267 (VYLI…YDIW), and 285-305 (VFKF…LDAI).

Belongs to the UbiA prenyltransferase family. Protoheme IX farnesyltransferase subfamily. In terms of assembly, interacts with CtaA.

The protein resides in the cell inner membrane. The catalysed reaction is heme b + (2E,6E)-farnesyl diphosphate + H2O = Fe(II)-heme o + diphosphate. It functions in the pathway porphyrin-containing compound metabolism; heme O biosynthesis; heme O from protoheme: step 1/1. Functionally, converts heme B (protoheme IX) to heme O by substitution of the vinyl group on carbon 2 of heme B porphyrin ring with a hydroxyethyl farnesyl side group. This chain is Protoheme IX farnesyltransferase, found in Jannaschia sp. (strain CCS1).